A 415-amino-acid chain; its full sequence is Probable G-protein coupled receptor 19 (415 aa).

Over 1–69 (MGFDHRMETD…LNPGEVATAS (69 aa)) the chain is Extracellular. 2 N-linked (GlcNAc...) asparagine glycosylation sites follow: Asn-25 and Asn-52. A helical membrane pass occupies residues 70–90 (IFFGALWLFSIFGNSLVCLVI). Residues 91–102 (HRSRRTQSTTNY) are Cytoplasmic-facing. Residues 103–123 (FVVSMACADLLISVASTPFVV) form a helical membrane-spanning segment. Residues 124–152 (LQFTTGRWTLGSAMCKVVRYFQYLTPGVQ) lie on the Extracellular side of the membrane. A disulfide bond links Cys-138 and Cys-210. The chain crosses the membrane as a helical span at residues 153–173 (IYVLLSICIDRFYTIVYPLSF). The Cytoplasmic segment spans residues 174 to 182 (KVSREKAKR). The helical transmembrane segment at 183-203 (MIAASWILDAAFVTPVFFFYG) threads the bilayer. Over 204 to 221 (SNWDSHCNYFLPPSWEGT) the chain is Extracellular. A helical transmembrane segment spans residues 222 to 242 (AYTVIHFLVGFVIPSVLIILF). Topologically, residues 243–277 (YQKVIKYIWRIGTDGRTLRRTMNIVPRTKVKTVKM) are cytoplasmic. Residues 278–298 (FLLLNLVFLFSWLPFHVAQLW) traverse the membrane as a helical segment. Topologically, residues 299-309 (HPHEQDYRKSS) are extracellular. Residues 310 to 332 (LVFTAVTWVSFSSSASKPTLYSI) form a helical membrane-spanning segment. Residues 333–415 (YNANFRRGMK…INSNPPNTFV (83 aa)) lie on the Cytoplasmic side of the membrane.

The protein belongs to the G-protein coupled receptor 1 family. Abundant expression in the brain.

The protein resides in the cell membrane. Its function is as follows. G-protein coupled receptor that plays a role in the regulation of circadian rhythms and energy metabolism. Participates in maintaining proper circadian gene expression in the suprachiasmatic nucleus (SCN), the locus of the master circadian clock in the brain. May function as a coordinator of aging-associated metabolic dysfunction, stress response, DNA integrity management, and eventual senescence. Upon binding to adropin, modulates mitochondrial energy metabolism via the p44/42-PDK4 signaling pathway, influencing pyruvate dehydrogenase activity. This Rattus norvegicus (Rat) protein is Probable G-protein coupled receptor 19 (Gpr19).